We begin with the raw amino-acid sequence, 860 residues long: Anoctamin-7 (860 aa).

Topologically, residues 1–297 (MLRKQAGEED…YFAWLGFYTG (297 aa)) are cytoplasmic. Positions 24 to 50 (NGCSYGSTAQASEAGKQQVAPSRVGSS) are disordered. A helical membrane pass occupies residues 298-318 (WLLPAAVVGTVVFLAGCFLVF). Over 319-362 (SDVPTQELCHSSDTFDMCPLCSDCSFWLLSSACTLAQAGRLFDH) the chain is Extracellular. The helical transmembrane segment at 363 to 383 (GGTVFFSLFMALWAVLLLEYW) threads the bilayer. At 384–441 (KRKNATLAYRWDCSDYEDIEERPRPQFAATAPMTALNPITGEDEPYFPEKNRVRRMLA) the chain is on the cytoplasmic side. The chain crosses the membrane as a helical span at residues 442 to 462 (GSVVLLMMVAVVIMCLVSIIL). Over 463–492 (YRAVMAIIVSKSNNAFLSAWASRIASLTGS) the chain is Extracellular. A helical membrane pass occupies residues 493–513 (VVNLVFILILSKVYVILAQVL). Topologically, residues 514–530 (TRWEMHRTQTAFEDAFT) are cytoplasmic. A helical transmembrane segment spans residues 531–551 (LKVFIFQFVNFYASPVYIAFF). The Extracellular segment spans residues 552–652 (KGRFVGYPGN…FHEYLEMVLQ (101 aa)). A helical transmembrane segment spans residues 653-673 (FGFVTIFVAACPLAPLFALLN). The Cytoplasmic portion of the chain corresponds to 674–701 (NWVEIRLDARKFVCEYRRPVAERAQDIG). The helical transmembrane segment at 702–722 (IWFHILAGLTHLAVISNAFLL) threads the bilayer. Topologically, residues 723-779 (AFSSDFLPRVYYSWTRAPDLRGFLNFTLARAPPTFTSAHNRTCRYRAFRDDDGHYSP) are extracellular. Residues Asn747 and Asn762 are each glycosylated (N-linked (GlcNAc...) asparagine). A helical membrane pass occupies residues 780–800 (TYWTLLAIRLAFVIVFEHVVF). Over 801–860 (STGRFLDLLVPDIPESVEIKVKREYYLAKQALADNEALLGATGVKGEQPPSSEPSLGLPA) the chain is Cytoplasmic.

The protein belongs to the anoctamin family.

The protein localises to the cell membrane. Its subcellular location is the endoplasmic reticulum. The catalysed reaction is a 1,2-diacyl-sn-glycero-3-phospho-L-serine(in) = a 1,2-diacyl-sn-glycero-3-phospho-L-serine(out). It catalyses the reaction a beta-D-galactosyl-(1&lt;-&gt;1')-N-acylsphing-4-enine(out) = a beta-D-galactosyl-(1&lt;-&gt;1')-N-acylsphing-4-enine(in). It carries out the reaction a 1,2-diacyl-sn-glycero-3-phosphocholine(in) = a 1,2-diacyl-sn-glycero-3-phosphocholine(out). Functionally, has calcium-dependent phospholipid scramblase activity; scrambles phosphatidylserine, phosphatidylcholine and galactosylceramide. Does not exhibit calcium-activated chloride channel (CaCC) activity. May play a role in cell-cell interactions. This Rattus norvegicus (Rat) protein is Anoctamin-7 (Ano7).